A 371-amino-acid chain; its full sequence is Glyco-Gag protein (371 aa).

At 1-51 (MSGASSGTAIGAHLFGVSPEYRVLIGDEGAGPSKSLSEVSFSVWYRSRAAR) the chain is on the cytoplasmic side. Residues 52–72 (LVILCLVASFLVPCLTFLIAE) traverse the membrane as a helical segment. Topologically, residues 73-371 (AVMGQTVTTP…NVIDETFPLT (299 aa)) are extracellular. A glycan (N-linked (GlcNAc...) asparagine; by host) is linked at Asn134. Disordered regions lie at residues 171 to 281 (VRPF…NNRP) and 350 to 371 (VPGE…FPLT). The segment covering 174-193 (FLPPPKPPTPLPQPLSPQPS) has biased composition (pro residues). Residues 194 to 203 (APLTSSLYPV) show a composition bias toward low complexity. 2 stretches are compositionally biased toward pro residues: residues 204 to 220 (VPKP…PDPS) and 230 to 245 (EPPP…PSGP).

Post-translationally, glycosylated by host. Cleaved by host near the middle of the molecule, releasing the c-terminal half containing capsid and nucleoprotein domains op GAG.

Its subcellular location is the host cell membrane. Its function is as follows. Plays a role in viral particle release. Presumably acts by facilitating the fission of the virion bud at the cell surface. This is Glyco-Gag protein from Feline sarcoma virus (strain Snyder-Theilen).